We begin with the raw amino-acid sequence, 238 residues long: Ubiquinone biosynthesis O-methyltransferase (238 aa).

The S-adenosyl-L-methionine site is built by arginine 39, glycine 58, aspartate 79, and methionine 123.

This sequence belongs to the methyltransferase superfamily. UbiG/COQ3 family.

It catalyses the reaction a 3-demethylubiquinol + S-adenosyl-L-methionine = a ubiquinol + S-adenosyl-L-homocysteine + H(+). The catalysed reaction is a 3-(all-trans-polyprenyl)benzene-1,2-diol + S-adenosyl-L-methionine = a 2-methoxy-6-(all-trans-polyprenyl)phenol + S-adenosyl-L-homocysteine + H(+). Its pathway is cofactor biosynthesis; ubiquinone biosynthesis. In terms of biological role, O-methyltransferase that catalyzes the 2 O-methylation steps in the ubiquinone biosynthetic pathway. This is Ubiquinone biosynthesis O-methyltransferase from Hahella chejuensis (strain KCTC 2396).